The chain runs to 217 residues: Killer cell lectin-like receptor subfamily B member 1F (217 aa).

Residues 1–45 (MDTSRVYGNVKTFRSPGHKQASFPSLSTDACRCPHWHHLALKLGC) lie on the Cytoplasmic side of the membrane. The short motif at 31–34 (CRCP) is the LCK-binding motif element. The chain crosses the membrane as a helical; Signal-anchor for type II membrane protein span at residues 46 to 66 (ATLILLLLTLIGLSVFVRFLV). Residues 67 to 217 (QKPLIEKCSM…WICQKTLKHV (151 aa)) are Extracellular-facing. A C-type lectin domain is found at 101-211 (HRNKCLIISQ…CSSDNHWICQ (111 aa)). 2 cysteine pairs are disulfide-bonded: C122–C210 and C189–C202.

Expressed in natural killer cells and a subset of T-cells.

Its subcellular location is the membrane. Functionally, binds CLEC2I/Clr-g leading to activation of natural killer cells or stimulation of IL-2 production and proliferation of T-cells in response to antigen stimulation. May contribute to the formation of the immunological synapse between T-cells and antigen-presenting dendritic cells. The chain is Killer cell lectin-like receptor subfamily B member 1F from Rattus norvegicus (Rat).